A 249-amino-acid chain; its full sequence is Chitooligosaccharide deacetylase (249 aa).

Mg(2+)-binding residues include His-61 and His-125.

This sequence belongs to the YdjC deacetylase family. ChbG subfamily. Homodimer. Mg(2+) serves as cofactor.

The protein resides in the cytoplasm. It catalyses the reaction N,N'-diacetylchitobiose + H2O = N-acetyl-beta-D-glucosaminyl-(1-&gt;4)-D-glucosamine + acetate. It carries out the reaction diacetylchitobiose-6'-phosphate + H2O = N'-monoacetylchitobiose-6'-phosphate + acetate. Its pathway is glycan degradation; chitin degradation. Involved in the degradation of chitin. ChbG is essential for growth on the acetylated chitooligosaccharides chitobiose and chitotriose but is dispensable for growth on cellobiose and chitosan dimer, the deacetylated form of chitobiose. Deacetylation of chitobiose-6-P and chitotriose-6-P is necessary for both the activation of the chb promoter by the regulatory protein ChbR and the hydrolysis of phosphorylated beta-glucosides by the phospho-beta-glucosidase ChbF. Catalyzes the removal of only one acetyl group from chitobiose-6-P to yield monoacetylchitobiose-6-P, the inducer of ChbR and the substrate of ChbF. In Escherichia coli O7:K1 (strain IAI39 / ExPEC), this protein is Chitooligosaccharide deacetylase.